Here is a 583-residue protein sequence, read N- to C-terminus: L-galactono-1,4-lactone dehydrogenase 1, mitochondrial (583 aa).

The transit peptide at methionine 1–proline 36 directs the protein to the mitochondrion. Positions alanine 37–lysine 78 are cleaved as a propeptide — removed in mature form. A helical transmembrane segment spans residues tyrosine 45–tyrosine 61. Positions threonine 95 to arginine 266 constitute an FAD-binding PCMH-type domain.

FAD serves as cofactor.

The protein resides in the mitochondrion membrane. It catalyses the reaction L-galactono-1,4-lactone + 4 Fe(III)-[cytochrome c] = L-dehydroascorbate + 4 Fe(II)-[cytochrome c] + 5 H(+). It functions in the pathway cofactor biosynthesis; L-ascorbate biosynthesis. Functionally, involved in the biosynthesis of ascorbic acid. This Oryza sativa subsp. japonica (Rice) protein is L-galactono-1,4-lactone dehydrogenase 1, mitochondrial (GLDH1).